Reading from the N-terminus, the 257-residue chain is 5-oxoprolinase subunit A (257 aa).

Belongs to the LamB/PxpA family. In terms of assembly, forms a complex composed of PxpA, PxpB and PxpC.

The catalysed reaction is 5-oxo-L-proline + ATP + 2 H2O = L-glutamate + ADP + phosphate + H(+). Functionally, catalyzes the cleavage of 5-oxoproline to form L-glutamate coupled to the hydrolysis of ATP to ADP and inorganic phosphate. In Natranaerobius thermophilus (strain ATCC BAA-1301 / DSM 18059 / JW/NM-WN-LF), this protein is 5-oxoprolinase subunit A.